Reading from the N-terminus, the 328-residue chain is MVKLAIDMMGGDNAPDIVLEAVQKAVEDFKDLEIILFGDEKKYNLNHERIEFRHCSEKIEMEDEPVRAIKRKKDSSMVKMAEAVKSGEADGCVSAGNTGALMSAGLFIVGRIKGVARPALVVTLPTIDGKGFVFLDVGANADAKPEHLLQYAQLGDIYAQKIRGIDNPKISLLNIGTEPAKGNSLTKKSYELLNQDHSLNFVGNIEAKTLMDGDTDVVVTDGYTGNMVLKNLEGTAKSIGKMLKDTIMSSTKNKLAGAILKKDLAEFAKKMDYSEYGGSVLLGLEGTVVKAHGSSNAKAFYSAIRQAKIAGEQNIVQTMKETVGESNE.

This sequence belongs to the PlsX family. In terms of assembly, homodimer. Probably interacts with PlsY.

It localises to the cytoplasm. The enzyme catalyses a fatty acyl-[ACP] + phosphate = an acyl phosphate + holo-[ACP]. It participates in lipid metabolism; phospholipid metabolism. Functionally, catalyzes the reversible formation of acyl-phosphate (acyl-PO(4)) from acyl-[acyl-carrier-protein] (acyl-ACP). This enzyme utilizes acyl-ACP as fatty acyl donor, but not acyl-CoA. The sequence is that of Phosphate acyltransferase from Staphylococcus aureus (strain MSSA476).